The chain runs to 551 residues: CTP synthase (551 aa).

Residues Met1 to Leu267 are amidoligase domain. Ser15 lines the CTP pocket. Ser15 lines the UTP pocket. Ser16–Thr21 serves as a coordination point for ATP. An L-glutamine-binding site is contributed by Tyr56. ATP is bound at residue Asp73. Mg(2+) is bound by residues Asp73 and Glu141. CTP contacts are provided by residues Asp148–Glu150, Lys188–Gln193, and Lys224. UTP is bound by residues Lys188–Gln193 and Lys224. In terms of domain architecture, Glutamine amidotransferase type-1 spans Arg292–Glu534. L-glutamine is bound at residue Gly355. The active-site Nucleophile; for glutamine hydrolysis is Cys382. L-glutamine is bound by residues Leu383 to Gln386, Glu406, and Arg462. Catalysis depends on residues His507 and Glu509.

The protein belongs to the CTP synthase family. As to quaternary structure, homotetramer.

The enzyme catalyses UTP + L-glutamine + ATP + H2O = CTP + L-glutamate + ADP + phosphate + 2 H(+). It carries out the reaction L-glutamine + H2O = L-glutamate + NH4(+). The catalysed reaction is UTP + NH4(+) + ATP = CTP + ADP + phosphate + 2 H(+). It functions in the pathway pyrimidine metabolism; CTP biosynthesis via de novo pathway; CTP from UDP: step 2/2. Its activity is regulated as follows. Allosterically activated by GTP, when glutamine is the substrate; GTP has no effect on the reaction when ammonia is the substrate. The allosteric effector GTP functions by stabilizing the protein conformation that binds the tetrahedral intermediate(s) formed during glutamine hydrolysis. Inhibited by the product CTP, via allosteric rather than competitive inhibition. Functionally, catalyzes the ATP-dependent amination of UTP to CTP with either L-glutamine or ammonia as the source of nitrogen. Regulates intracellular CTP levels through interactions with the four ribonucleotide triphosphates. The sequence is that of CTP synthase from Rubrobacter xylanophilus (strain DSM 9941 / JCM 11954 / NBRC 16129 / PRD-1).